The primary structure comprises 493 residues: Fizzy-related protein homolog (493 aa).

3 disordered regions span residues L31–S51, I64–G88, and E105–K166. At T32 the chain carries Phosphothreonine. Residues T32–S42 show a composition bias toward polar residues. S36 bears the Phosphoserine mark. K69 carries the N6-acetyllysine modification. Basic and acidic residues-rich tracts occupy residues K76 to K86 and K106 to G126. 4 positions are modified to phosphoserine: S133, S138, S146, and S151. Positions S146–L160 are enriched in polar residues. An N6-acetyllysine modification is found at K159. WD repeat units follow at residues P182–L222, V227–M266, G269–E306, G311–Q350, E353–C395, D397–K438, and G441–K480.

This sequence belongs to the WD repeat CDC20/Fizzy family. In terms of assembly, the unphosphorylated form interacts with APC/C during mitosis. Interacts with NINL. Interacts (in complex with the anaphase promoting complex APC) with MAD2L2; inhibits FZR1-mediated APC/C activation. Interacts with SIRT2. Interacts with USP37. Interacts (via WD repeats) with MAK. Interacts with RBBP8/CtIP; this interaction leads to RBBP8 proteasomal degradation. Interacts with HECW2. Interacts with SASS6; the interaction is regulated by CENATAC and leads to SASS6 proteasomal degradation. Interacts (via N-terminus) with CCNF. Interacts with CDC6. Interacts with TK1 (via the KEN box). In terms of processing, acetylated. Deacetylated by SIRT2 at Lys-69 and Lys-159; deacetylation enhances the interaction of FZR1 with CDC27, leading to activation of anaphase promoting complex/cyclosome (APC/C). Post-translationally, following DNA damage, it is dephosphorylated by CDC14B in G2 phase, leading to its reassociation with the APC/C, and allowing an efficient G2 DNA damage checkpoint. Phosphorylated by MAK.

The protein operates within protein modification; protein ubiquitination. In terms of biological role, substrate-specific adapter for the anaphase promoting complex/cyclosome (APC/C) E3 ubiquitin-protein ligase complex. Associates with the APC/C in late mitosis, in replacement of CDC20, and activates the APC/C during anaphase and telophase. The APC/C remains active in degrading substrates to ensure that positive regulators of the cell cycle do not accumulate prematurely. At the G1/S transition FZR1 is phosphorylated, leading to its dissociation from the APC/C. Following DNA damage, it is required for the G2 DNA damage checkpoint: its dephosphorylation and reassociation with the APC/C leads to the ubiquitination of PLK1, preventing entry into mitosis. Acts as an adapter for APC/C to target the DNA-end resection factor RBBP8/CtIP for ubiquitination and subsequent proteasomal degradation. Through the regulation of RBBP8/CtIP protein turnover, may play a role in DNA damage response, favoring DNA double-strand repair through error-prone non-homologous end joining (NHEJ) over error-free, RBBP8-mediated homologous recombination (HR). The protein is Fizzy-related protein homolog (Fzr1) of Mus musculus (Mouse).